The sequence spans 1103 residues: PALM2-AKAP2 fusion protein (1103 aa).

2 disordered regions span residues 178–197 and 304–396; these read ESASNATETSGPDMTIKKPP and YNGT…SSRD. Positions 179–189 are enriched in polar residues; the sequence is SASNATETSGP. 3 positions are modified to phosphoserine: Ser322, Ser352, and Ser383. Over residues 380-392 the composition is skewed to low complexity; the sequence is VPVSPSSTTSSRC. Lys405 is covalently cross-linked (Glycyl lysine isopeptide (Lys-Gly) (interchain with G-Cter in SUMO1); alternate). Lys405 is covalently cross-linked (Glycyl lysine isopeptide (Lys-Gly) (interchain with G-Cter in SUMO2); alternate). Residues 444–521 are a coiled coil; sequence EEMLELEKER…QKQLQQQQQQ (78 aa). 2 disordered regions span residues 483-544 and 566-662; these read EQLD…DKAK and NSRQ…SKLW. The span at 490-505 shows a compositional bias: basic and acidic residues; the sequence is LESHKKYKERKERRAQ. A compositionally biased stretch (low complexity) spans 506-521; that stretch reads QEQLLLQKQLQQQQQQ. The segment covering 522-531 has biased composition (polar residues); sequence PPSQLCTAPA. Over residues 533 to 544 the composition is skewed to basic and acidic residues; it reads SHERASMIDKAK. The segment covering 566-579 has biased composition (polar residues); sequence NSRQAVAKGQSTPR. Residues Ser567 and Ser624 each carry the phosphoserine modification. Over residues 633 to 643 the composition is skewed to polar residues; the sequence is AAGSQGNTASQ. A phosphoserine mark is found at Ser692, Ser696, and Ser748. The span at 745–763 shows a compositional bias: polar residues; sequence QENSLADFSLPQTPQTDNP. The interval 745 to 794 is disordered; the sequence is QENSLADFSLPQTPQTDNPSEGRGEGVSKSFSDHGFYSPSSTLGDSPLVD. At Thr757 the chain carries Phosphothreonine. The PKA-RII subunit binding domain stretch occupies residues 797–810; sequence LEYQAGLLVQNAIQ. Over residues 817–829 the composition is skewed to basic and acidic residues; the sequence is VDKAVSKTSRDGA. The segment at 817-907 is disordered; it reads VDKAVSKTSR…GPINMEETRP (91 aa). Phosphoserine is present on Ser862. The segment covering 865 to 886 has biased composition (basic and acidic residues); sequence QEKRDVLPKILPAEDRALRERG. The stretch at 941 to 979 forms a coiled coil; that stretch reads KLRSRKQRTLSMIEEEIRAAQEREEELKRQRQVLQSTQS. Residues Ser951, Ser979, Ser1009, and Ser1016 each carry the phosphoserine modification. The segment at 962-1035 is disordered; the sequence is EREEELKRQR…AAGTQRPKNL (74 aa). Residues 976–990 show a composition bias toward polar residues; that stretch reads STQSPRTKNAPSLPS.

As to expression, expressed in infantile heart and muscle, and fibroblasts.

It localises to the apical cell membrane. In terms of biological role, binds to regulatory subunit (RII) of protein kinase A. May be involved in establishing polarity in signaling systems or in integrating PKA-RII isoforms with downstream effectors to capture, amplify and focus diffuse, trans-cellular signals carried by cAMP. Binds to and modulates the structure of the actin cytoskeleton. This is PALM2-AKAP2 fusion protein from Homo sapiens (Human).